We begin with the raw amino-acid sequence, 239 residues long: Peptidyl-tRNA hydrolase (239 aa).

Y14 is a tRNA binding site. H19 functions as the Proton acceptor in the catalytic mechanism. Residues F64, N66, and N112 each contribute to the tRNA site. The interval 188 to 225 (GGKPDAEEPQAPKKQVGQSHIHKARNAAQPKKLPATGP) is disordered.

It belongs to the PTH family. In terms of assembly, monomer.

It is found in the cytoplasm. The catalysed reaction is an N-acyl-L-alpha-aminoacyl-tRNA + H2O = an N-acyl-L-amino acid + a tRNA + H(+). Its function is as follows. Hydrolyzes ribosome-free peptidyl-tRNAs (with 1 or more amino acids incorporated), which drop off the ribosome during protein synthesis, or as a result of ribosome stalling. Functionally, catalyzes the release of premature peptidyl moieties from peptidyl-tRNA molecules trapped in stalled 50S ribosomal subunits, and thus maintains levels of free tRNAs and 50S ribosomes. The chain is Peptidyl-tRNA hydrolase from Sinorhizobium fredii (strain NBRC 101917 / NGR234).